Consider the following 417-residue polypeptide: Gamma-glutamyl phosphate reductase (417 aa).

The protein belongs to the gamma-glutamyl phosphate reductase family.

It localises to the cytoplasm. It catalyses the reaction L-glutamate 5-semialdehyde + phosphate + NADP(+) = L-glutamyl 5-phosphate + NADPH + H(+). It participates in amino-acid biosynthesis; L-proline biosynthesis; L-glutamate 5-semialdehyde from L-glutamate: step 2/2. Catalyzes the NADPH-dependent reduction of L-glutamate 5-phosphate into L-glutamate 5-semialdehyde and phosphate. The product spontaneously undergoes cyclization to form 1-pyrroline-5-carboxylate. The chain is Gamma-glutamyl phosphate reductase from Escherichia fergusonii (strain ATCC 35469 / DSM 13698 / CCUG 18766 / IAM 14443 / JCM 21226 / LMG 7866 / NBRC 102419 / NCTC 12128 / CDC 0568-73).